A 217-amino-acid polypeptide reads, in one-letter code: uncharacterized protein (217 aa).

The next 2 helical transmembrane spans lie at 151–171 (LIPF…HSLF) and 177–197 (ISFH…FILF).

The protein localises to the mitochondrion membrane. This is an uncharacterized protein from Schizosaccharomyces pombe (strain 972 / ATCC 24843) (Fission yeast).